Consider the following 227-residue polypeptide: 2,3-bisphosphoglycerate-dependent phosphoglycerate mutase (227 aa).

Residues R7 to N14, T20 to G21, R59, E86 to Y89, K97, R113 to R114, and G182 to N183 contribute to the substrate site. H8 serves as the catalytic Tele-phosphohistidine intermediate. E86 serves as the catalytic Proton donor/acceptor.

Belongs to the phosphoglycerate mutase family. BPG-dependent PGAM subfamily. In terms of assembly, homodimer.

It carries out the reaction (2R)-2-phosphoglycerate = (2R)-3-phosphoglycerate. It participates in carbohydrate degradation; glycolysis; pyruvate from D-glyceraldehyde 3-phosphate: step 3/5. Its function is as follows. Catalyzes the interconversion of 2-phosphoglycerate and 3-phosphoglycerate. The chain is 2,3-bisphosphoglycerate-dependent phosphoglycerate mutase from Neisseria meningitidis serogroup C / serotype 2a (strain ATCC 700532 / DSM 15464 / FAM18).